Here is a 252-residue protein sequence, read N- to C-terminus: Imidazole glycerol phosphate synthase subunit HisF (252 aa).

Active-site residues include Asp11 and Asp130.

The protein belongs to the HisA/HisF family. Heterodimer of HisH and HisF.

The protein resides in the cytoplasm. It carries out the reaction 5-[(5-phospho-1-deoxy-D-ribulos-1-ylimino)methylamino]-1-(5-phospho-beta-D-ribosyl)imidazole-4-carboxamide + L-glutamine = D-erythro-1-(imidazol-4-yl)glycerol 3-phosphate + 5-amino-1-(5-phospho-beta-D-ribosyl)imidazole-4-carboxamide + L-glutamate + H(+). Its pathway is amino-acid biosynthesis; L-histidine biosynthesis; L-histidine from 5-phospho-alpha-D-ribose 1-diphosphate: step 5/9. Its function is as follows. IGPS catalyzes the conversion of PRFAR and glutamine to IGP, AICAR and glutamate. The HisF subunit catalyzes the cyclization activity that produces IGP and AICAR from PRFAR using the ammonia provided by the HisH subunit. The chain is Imidazole glycerol phosphate synthase subunit HisF from Paramagnetospirillum magneticum (strain ATCC 700264 / AMB-1) (Magnetospirillum magneticum).